The following is a 228-amino-acid chain: MNKPVFIALDFPNLKTAFDFLNKFPSHEKPAVKVGMELFYAEGPKIIQQLRQKGYKVFLDLKLYDIPHTVAAAVRSLLALDVQYLTIHSLGGLKMMEAAVDAAEGKIKLLAVTQLTSISANEMRGTQLTSATIEQSVKHLTQLALLAGVDGTISSPLEANIIKQITPDDFLKITPGIRLFNDQNGDQIRITTPKKAKEFGASGLVVGRSITQAADPLSVYRKILEEFE.

Residues Asp-10, Lys-33, 60–69, Thr-116, Arg-178, Gln-187, Gly-207, and Arg-208 each bind substrate; that span reads DLKLYDIPHT. The active-site Proton donor is the Lys-62.

Belongs to the OMP decarboxylase family. Type 1 subfamily. Homodimer.

The enzyme catalyses orotidine 5'-phosphate + H(+) = UMP + CO2. The protein operates within pyrimidine metabolism; UMP biosynthesis via de novo pathway; UMP from orotate: step 2/2. Functionally, catalyzes the decarboxylation of orotidine 5'-monophosphate (OMP) to uridine 5'-monophosphate (UMP). This Oenococcus oeni (strain ATCC BAA-331 / PSU-1) protein is Orotidine 5'-phosphate decarboxylase.